A 134-amino-acid polypeptide reads, in one-letter code: Small ribosomal subunit protein uS11 (134 aa).

Disordered stretches follow at residues 1–22 (MPPK…KNVA) and 114–134 (SIQD…RRRV). The segment covering 9 to 22 (AAKKVRRKEKKNVA) has biased composition (basic residues).

It belongs to the universal ribosomal protein uS11 family. In terms of assembly, part of the 30S ribosomal subunit. Interacts with proteins S7 and S18. Binds to IF-3.

Located on the platform of the 30S subunit, it bridges several disparate RNA helices of the 16S rRNA. Forms part of the Shine-Dalgarno cleft in the 70S ribosome. This Streptomyces avermitilis (strain ATCC 31267 / DSM 46492 / JCM 5070 / NBRC 14893 / NCIMB 12804 / NRRL 8165 / MA-4680) protein is Small ribosomal subunit protein uS11.